Reading from the N-terminus, the 347-residue chain is Haptoglobin (347 aa).

Positions 1 to 18 are cleaved as a signal peptide; it reads MRALGAVVTLLLWGQLFA. Residues 31–88 form the Sushi domain; that stretch reads DSCPKPPEIANGYVEHLVRYRCRQFYRLRTEGDGVYTLNDEKQWVNTAAGEKLPECEA. Intrachain disulfides connect cysteine 52–cysteine 86, cysteine 90–cysteine 207, cysteine 250–cysteine 281, and cysteine 292–cysteine 322. One can recognise a Peptidase S1 domain in the interval 103–345; that stretch reads IIGGSMDAKG…LKDWVQETMA (243 aa). N-linked (GlcNAc...) asparagine glycosylation is found at asparagine 148, asparagine 182, asparagine 256, and asparagine 264. The interaction with CD163 stretch occupies residues 259-264; it reads VPEKKN.

The protein belongs to the peptidase S1 family. Tetramer of two alpha and two beta chains; disulfide-linked. The hemoglobin/haptoglobin complex is composed of a haptoglobin dimer bound to two hemoglobin alpha-beta dimers. Interacts with CD163. Interacts with ERGIC3. In terms of tissue distribution, expressed by the liver and secreted in plasma.

It is found in the secreted. As a result of hemolysis, hemoglobin is found to accumulate in the kidney and is secreted in the urine. Haptoglobin captures, and combines with free plasma hemoglobin to allow hepatic recycling of heme iron and to prevent kidney damage. Haptoglobin also acts as an antioxidant, has antibacterial activity and plays a role in modulating many aspects of the acute phase response. Hemoglobin/haptoglobin complexes are rapidly cleared by the macrophage CD163 scavenger receptor expressed on the surface of liver Kupfer cells through an endocytic lysosomal degradation pathway. The protein is Haptoglobin (Hp) of Mus saxicola (Brown spiny mouse).